A 498-amino-acid polypeptide reads, in one-letter code: ATP synthase subunit beta, chloroplastic (498 aa).

172–179 serves as a coordination point for ATP; the sequence is GGAGVGKT.

It belongs to the ATPase alpha/beta chains family. As to quaternary structure, F-type ATPases have 2 components, CF(1) - the catalytic core - and CF(0) - the membrane proton channel. CF(1) has five subunits: alpha(3), beta(3), gamma(1), delta(1), epsilon(1). CF(0) has four main subunits: a(1), b(1), b'(1) and c(9-12).

The protein resides in the plastid. Its subcellular location is the chloroplast thylakoid membrane. It catalyses the reaction ATP + H2O + 4 H(+)(in) = ADP + phosphate + 5 H(+)(out). Produces ATP from ADP in the presence of a proton gradient across the membrane. The catalytic sites are hosted primarily by the beta subunits. This chain is ATP synthase subunit beta, chloroplastic, found in Nicotiana rustica (Aztec tobacco).